Here is a 102-residue protein sequence, read N- to C-terminus: Ferredoxin-thioredoxin reductase, catalytic chain (102 aa).

C53 lines the [4Fe-4S] cluster pocket. Catalysis depends on C55, which acts as the Nucleophile. C55 and C85 are oxidised to a cystine. [4Fe-4S] cluster is bound by residues C72, C74, and C83.

Belongs to the ferredoxin thioredoxin reductase beta subunit family. Heterodimer of subunit A (variable subunit) and subunit B (catalytic subunit). Heterodimeric FTR forms a complex with ferredoxin and thioredoxin. The cofactor is [4Fe-4S] cluster.

It localises to the plastid. Its subcellular location is the chloroplast. It catalyses the reaction [thioredoxin]-disulfide + 2 reduced [2Fe-2S]-[ferredoxin] + 2 H(+) = [thioredoxin]-dithiol + 2 oxidized [2Fe-2S]-[ferredoxin]. Catalytic subunit of the ferredoxin-thioredoxin reductase (FTR), which catalyzes the two-electron reduction of thioredoxins by the electrons provided by reduced ferredoxin. This chain is Ferredoxin-thioredoxin reductase, catalytic chain (ftrB), found in Guillardia theta (Cryptophyte).